The chain runs to 1469 residues: Chromosome condensation protein dpy-27 (1469 aa).

The segment at 1–25 is disordered; the sequence is MQPFKRRALTSDDDRPYADTDSMPE. Residues 9 to 18 are compositionally biased toward basic and acidic residues; that stretch reads LTSDDDRPYA. 122-129 provides a ligand contact to ATP; the sequence is GPNGSGKS. Positions 356 to 542 form a coiled coil; sequence ELEENKDIML…KGTLQTMMAE (187 aa). The region spanning 621–736 is the SMC hinge domain; the sequence is PGFKGRLGDL…VDSLEEATRI (116 aa). Positions 758 to 781 are disordered; the sequence is GALTGGGKPTTGRIRNDNNPNMSG. Coiled-coil stretches lie at residues 805–974, 1016–1056, and 1159–1182; these read LKLQ…AQLE, AYQT…DIIE, and TSAK…RMAR. A disordered region spans residues 1404–1469; that stretch reads LPEFNRFPPA…VQRRVRRSRH (66 aa). A compositionally biased stretch (acidic residues) spans 1439 to 1449; it reads EEEDEEDELIE.

Belongs to the SMC family. SMC4 subfamily. As to quaternary structure, component of the dosage compensation complex, which contains the mix-1/SMC2 and dpy-27/SMC4 heterodimer, and three non SMC subunits that probably regulate the complex: dpy-26, capg-1 and dpy-28. Within the complex, interacts with dpy-28, mix-1, dpy-26 and capg-1. Interacts with dpy-21. Interacts with dpy-28; the interaction is required for dpy-28 protein stability and dpy-28 association with the X chromosome. Interacts with smcl-1.

It is found in the nucleus. Its subcellular location is the chromosome. Central component of the condensin I-like dosage compensation complex that associates specifically with hermaphrodite X chromosomes to reduce their gene transcription throughout development. Its strong similarity with the condensin subunit smc4 suggests that it may reduce the X-chromosome transcript level by condensing the chromatin structure during interphase. Involved in the recruitment of the dosage compensation proteins mix-1 and dpy-21 to the X chromosome. Might be involved in the reduction of histone H4 lysine 16 acetylation (H4K16ac) on dosage compensated X chromosomes. As a member of the dosage compensation complex, also binds to regulatory regions of the autosomal her-1 gene, required for male development, possibly contributing to its repression in hermaphrodites. Also plays a role in the regulation of growth and body fat metabolism downstream of the TOR complex 2 pathway. The protein is Chromosome condensation protein dpy-27 (dpy-27) of Caenorhabditis elegans.